The following is a 313-amino-acid chain: Protein FixB (313 aa).

255 to 283 (LYLAVGISGQIQHMVGANASQTIFAINKD) is a binding site for FAD.

It belongs to the ETF alpha-subunit/FixB family. In terms of assembly, heterodimer of FixA and FixB.

The protein operates within amine and polyamine metabolism; carnitine metabolism. Functionally, required for anaerobic carnitine reduction. May bring reductant to CaiA. This is Protein FixB from Escherichia coli O81 (strain ED1a).